A 91-amino-acid polypeptide reads, in one-letter code: MVKNSFISVISQEEEKEENRGSIEFQVFRFTNKIRRLTSHLELHRKDYLSQRGLRKILGKRQRLLSYLSKKNRIRYKELISQLDIRESKTR.

Belongs to the universal ribosomal protein uS15 family. In terms of assembly, part of the 30S ribosomal subunit.

The protein localises to the plastid. It is found in the chloroplast. This chain is Small ribosomal subunit protein uS15c (rps15), found in Eucalyptus globulus subsp. globulus (Tasmanian blue gum).